The following is a 206-amino-acid chain: MRPLTPRQAEILELIKRNIAETGMPPTRAEIATRLGFKSANAAEEHLKALAKKGCIEIMPGTSRGIRLPVEEEDNSESGLPLIGQVAAGEPILAQEHVEQYYQVDPSMFHPAANFLLRVRGDSMKNIGILEGDLLAVHKVQQARNGQVVVARVDDDVTVKRFEKKGNLVYLHAENEDYSPIKVDLSFQSLTIEGLAVGVIRNGDWL.

A DNA-binding region (H-T-H motif) is located at residues 28 to 48 (RAEIATRLGFKSANAAEEHLK). Catalysis depends on for autocatalytic cleavage activity residues S123 and K160.

The protein belongs to the peptidase S24 family. As to quaternary structure, homodimer.

It catalyses the reaction Hydrolysis of Ala-|-Gly bond in repressor LexA.. Functionally, represses a number of genes involved in the response to DNA damage (SOS response), including recA and lexA. In the presence of single-stranded DNA, RecA interacts with LexA causing an autocatalytic cleavage which disrupts the DNA-binding part of LexA, leading to derepression of the SOS regulon and eventually DNA repair. The sequence is that of LexA repressor from Shewanella sp. (strain ANA-3).